The sequence spans 265 residues: MALQIPSLLLSAAVVVLMVLSSPRTEGGNSERHFVAQLKGECYFTNGTQRIRSVNRYIYNREEWVRFDSDVGEYRAVTELGRPDAEYWNSQPEILERTRAEVDTVCRHNYEGVETHTSLRRLEQPNVAISLSRTEALNHHNTLVCSVTDFYPAKIKVRWFRNGQEETVGVSSTQLIRNGDWTFQVLVMLEMTPHQGEVYTCHVEHPSLKSPITVEWRAQSESARSKMLSGIGGCVLGVIFLGLGLFIRHRSQKGPRGPPPAGLLQ.

A signal peptide spans M1–G27. The interval G28 to L122 is beta-1. The Extracellular portion of the chain corresponds to G28–M227. Disulfide bonds link C42/C106 and C145/C201. N-linked (GlcNAc...) asparagine glycosylation is present at N46. The segment at E123–R217 is beta-2. Residues P125 to T213 form the Ig-like C1-type domain. The interval A218–M227 is connecting peptide. A helical transmembrane segment spans residues L228 to I247. Residues R248–Q265 lie on the Cytoplasmic side of the membrane.

Belongs to the MHC class II family. In terms of processing, ubiquitinated in immature dendritic cells leading to down-regulation of MHC class II.

The protein resides in the membrane. In Mus musculus (Mouse), this protein is H-2 class II histocompatibility antigen, A-Q beta chain (H2-Ab1).